Consider the following 235-residue polypeptide: Aspartate/glutamate leucyltransferase (235 aa).

It belongs to the R-transferase family. Bpt subfamily.

The protein resides in the cytoplasm. It carries out the reaction N-terminal L-glutamyl-[protein] + L-leucyl-tRNA(Leu) = N-terminal L-leucyl-L-glutamyl-[protein] + tRNA(Leu) + H(+). The enzyme catalyses N-terminal L-aspartyl-[protein] + L-leucyl-tRNA(Leu) = N-terminal L-leucyl-L-aspartyl-[protein] + tRNA(Leu) + H(+). Functionally, functions in the N-end rule pathway of protein degradation where it conjugates Leu from its aminoacyl-tRNA to the N-termini of proteins containing an N-terminal aspartate or glutamate. The sequence is that of Aspartate/glutamate leucyltransferase from Pseudomonas entomophila (strain L48).